The chain runs to 340 residues: Glycerol-3-phosphate dehydrogenase [NAD(P)+] (340 aa).

NADPH contacts are provided by serine 11, tryptophan 12, arginine 33, and lysine 106. Positions 106, 137, and 139 each coordinate sn-glycerol 3-phosphate. An NADPH-binding site is contributed by alanine 141. Sn-glycerol 3-phosphate contacts are provided by lysine 192, aspartate 245, serine 255, arginine 256, and asparagine 257. Lysine 192 acts as the Proton acceptor in catalysis. NADPH is bound at residue arginine 256. NADPH is bound by residues valine 280 and glutamate 282.

Belongs to the NAD-dependent glycerol-3-phosphate dehydrogenase family.

The protein resides in the cytoplasm. It carries out the reaction sn-glycerol 3-phosphate + NAD(+) = dihydroxyacetone phosphate + NADH + H(+). The catalysed reaction is sn-glycerol 3-phosphate + NADP(+) = dihydroxyacetone phosphate + NADPH + H(+). It participates in membrane lipid metabolism; glycerophospholipid metabolism. Functionally, catalyzes the reduction of the glycolytic intermediate dihydroxyacetone phosphate (DHAP) to sn-glycerol 3-phosphate (G3P), the key precursor for phospholipid synthesis. The protein is Glycerol-3-phosphate dehydrogenase [NAD(P)+] of Bacillus mycoides (strain KBAB4) (Bacillus weihenstephanensis).